Here is a 131-residue protein sequence, read N- to C-terminus: Small ribosomal subunit protein uS11 (131 aa).

The protein belongs to the universal ribosomal protein uS11 family. In terms of assembly, part of the 30S ribosomal subunit. Interacts with proteins S7 and S18. Binds to IF-3.

Functionally, located on the platform of the 30S subunit, it bridges several disparate RNA helices of the 16S rRNA. Forms part of the Shine-Dalgarno cleft in the 70S ribosome. The polypeptide is Small ribosomal subunit protein uS11 (Cellvibrio japonicus (strain Ueda107) (Pseudomonas fluorescens subsp. cellulosa)).